The following is a 590-amino-acid chain: Aspartate--tRNA(Asp/Asn) ligase (590 aa).

Glu172 serves as a coordination point for L-aspartate. The tract at residues 196-199 (QLFK) is aspartate. Arg218 provides a ligand contact to L-aspartate. Residues 218-220 (RDE) and Gln227 each bind ATP. An L-aspartate-binding site is contributed by His449. Glu484 provides a ligand contact to ATP. Arg491 is an L-aspartate binding site. Position 536 to 539 (536 to 539 (GVDR)) interacts with ATP.

The protein belongs to the class-II aminoacyl-tRNA synthetase family. Type 1 subfamily. As to quaternary structure, homodimer.

It localises to the cytoplasm. The catalysed reaction is tRNA(Asx) + L-aspartate + ATP = L-aspartyl-tRNA(Asx) + AMP + diphosphate. Its function is as follows. Aspartyl-tRNA synthetase with relaxed tRNA specificity since it is able to aspartylate not only its cognate tRNA(Asp) but also tRNA(Asn). Reaction proceeds in two steps: L-aspartate is first activated by ATP to form Asp-AMP and then transferred to the acceptor end of tRNA(Asp/Asn). The chain is Aspartate--tRNA(Asp/Asn) ligase from Francisella tularensis subsp. tularensis (strain WY96-3418).